The following is a 152-amino-acid chain: 3-hydroxyacyl-[acyl-carrier-protein] dehydratase FabZ (152 aa).

Residue His54 is part of the active site.

This sequence belongs to the thioester dehydratase family. FabZ subfamily.

It localises to the cytoplasm. It catalyses the reaction a (3R)-hydroxyacyl-[ACP] = a (2E)-enoyl-[ACP] + H2O. Involved in unsaturated fatty acids biosynthesis. Catalyzes the dehydration of short chain beta-hydroxyacyl-ACPs and long chain saturated and unsaturated beta-hydroxyacyl-ACPs. The polypeptide is 3-hydroxyacyl-[acyl-carrier-protein] dehydratase FabZ (Buchnera aphidicola subsp. Schizaphis graminum (strain Sg)).